The chain runs to 317 residues: Small ribosomal subunit protein uS2 (317 aa).

Disordered regions lie at residues 1–30 (MENENLKVEQATTAENNMAEKADDSKASKE) and 293–317 (RSFEQNSAEGVKTVEKTTTSTEVAE). Residues 18-30 (MAEKADDSKASKE) are compositionally biased toward basic and acidic residues. Residues 308–317 (KTTTSTEVAE) show a composition bias toward low complexity.

The protein belongs to the universal ribosomal protein uS2 family.

This is Small ribosomal subunit protein uS2 from Mycoplasmopsis agalactiae (strain NCTC 10123 / CIP 59.7 / PG2) (Mycoplasma agalactiae).